The sequence spans 57 residues: MAVPKRRTSKKVKNQRRTHKKLHVPGMVECSNCGELTKPHRVCKSCGHYDGKEVVNG.

The interval 1–21 is disordered; that stretch reads MAVPKRRTSKKVKNQRRTHKK.

Belongs to the bacterial ribosomal protein bL32 family.

The sequence is that of Large ribosomal subunit protein bL32 from Oceanobacillus iheyensis (strain DSM 14371 / CIP 107618 / JCM 11309 / KCTC 3954 / HTE831).